The primary structure comprises 426 residues: Bifunctional protein GlmU (426 aa).

The pyrophosphorylase stretch occupies residues 1-216 (MSEVDVVILA…WHDILGVNTQ (216 aa)). UDP-N-acetyl-alpha-D-glucosamine contacts are provided by residues 9-12 (LAAG), Lys23, and Gln69. Asp97 contributes to the Mg(2+) binding site. Residues Gly132, Glu148, Asn163, and Asn214 each contribute to the UDP-N-acetyl-alpha-D-glucosamine site. Mg(2+) is bound at residue Asn214. The linker stretch occupies residues 217–237 (QQLAAVSKIARKRINDQIMAN). Residues 238 to 426 (GVTMIDPLTT…AKHDQRDDQP (189 aa)) form an N-acetyltransferase region. The UDP-N-acetyl-alpha-D-glucosamine site is built by Arg286 and Lys304. His316 functions as the Proton acceptor in the catalytic mechanism. The UDP-N-acetyl-alpha-D-glucosamine site is built by Tyr319 and Asn330. Residues Ala333, 339-340 (NY), Ser358, Ala376, and Arg393 contribute to the acetyl-CoA site.

It in the N-terminal section; belongs to the N-acetylglucosamine-1-phosphate uridyltransferase family. The protein in the C-terminal section; belongs to the transferase hexapeptide repeat family. Homotrimer. The cofactor is Mg(2+).

It is found in the cytoplasm. The enzyme catalyses alpha-D-glucosamine 1-phosphate + acetyl-CoA = N-acetyl-alpha-D-glucosamine 1-phosphate + CoA + H(+). The catalysed reaction is N-acetyl-alpha-D-glucosamine 1-phosphate + UTP + H(+) = UDP-N-acetyl-alpha-D-glucosamine + diphosphate. Its pathway is nucleotide-sugar biosynthesis; UDP-N-acetyl-alpha-D-glucosamine biosynthesis; N-acetyl-alpha-D-glucosamine 1-phosphate from alpha-D-glucosamine 6-phosphate (route II): step 2/2. It participates in nucleotide-sugar biosynthesis; UDP-N-acetyl-alpha-D-glucosamine biosynthesis; UDP-N-acetyl-alpha-D-glucosamine from N-acetyl-alpha-D-glucosamine 1-phosphate: step 1/1. It functions in the pathway bacterial outer membrane biogenesis; LPS lipid A biosynthesis. Catalyzes the last two sequential reactions in the de novo biosynthetic pathway for UDP-N-acetylglucosamine (UDP-GlcNAc). The C-terminal domain catalyzes the transfer of acetyl group from acetyl coenzyme A to glucosamine-1-phosphate (GlcN-1-P) to produce N-acetylglucosamine-1-phosphate (GlcNAc-1-P), which is converted into UDP-GlcNAc by the transfer of uridine 5-monophosphate (from uridine 5-triphosphate), a reaction catalyzed by the N-terminal domain. This is Bifunctional protein GlmU from Oenococcus oeni (strain ATCC BAA-331 / PSU-1).